The primary structure comprises 335 residues: Beta-hexosaminidase (335 aa).

Substrate contacts are provided by residues aspartate 60, arginine 68, arginine 133, and 163 to 164; that span reads KH. Histidine 176 (proton donor/acceptor) is an active-site residue. Residue aspartate 247 is the Nucleophile of the active site.

This sequence belongs to the glycosyl hydrolase 3 family. NagZ subfamily.

It localises to the cytoplasm. It catalyses the reaction Hydrolysis of terminal non-reducing N-acetyl-D-hexosamine residues in N-acetyl-beta-D-hexosaminides.. It functions in the pathway cell wall biogenesis; peptidoglycan recycling. Its function is as follows. Plays a role in peptidoglycan recycling by cleaving the terminal beta-1,4-linked N-acetylglucosamine (GlcNAc) from peptide-linked peptidoglycan fragments, giving rise to free GlcNAc, anhydro-N-acetylmuramic acid and anhydro-N-acetylmuramic acid-linked peptides. The sequence is that of Beta-hexosaminidase from Stenotrophomonas maltophilia (strain R551-3).